We begin with the raw amino-acid sequence, 417 residues long: Cytoplasmic tRNA 2-thiolation protein 2 (417 aa).

Over residues 1 to 11 (MCSIVEDDFGD) the composition is skewed to acidic residues. The segment at 1 to 24 (MCSIVEDDFGDEGGAHAMKEDTPQ) is disordered. Residues 13–22 (GGAHAMKEDT) are compositionally biased toward basic and acidic residues.

The protein belongs to the CTU2/NCS2 family.

The protein resides in the cytoplasm. The protein operates within tRNA modification; 5-methoxycarbonylmethyl-2-thiouridine-tRNA biosynthesis. In terms of biological role, plays a central role in 2-thiolation of mcm(5)S(2)U at tRNA wobble positions of tRNA(Lys), tRNA(Glu) and tRNA(Gln). May act by forming a heterodimer with NCS6/CTU1 that ligates sulfur from thiocarboxylated URM1 onto the uridine of tRNAs at wobble position. This Anopheles gambiae (African malaria mosquito) protein is Cytoplasmic tRNA 2-thiolation protein 2.